Reading from the N-terminus, the 109-residue chain is MNKIFFFKILLFAYLASFLRFFLNNNLLVGVIGSFVYGFVISRRVSKLKKEILLTGFCSCFTSFSGFVLFLYEISIQGYFLKLFFYLNIIIVLNLIIMYAGFLLGRKVT.

3 helical membrane-spanning segments follow: residues 21 to 41 (FFLNNNLLVGVIGSFVYGFVI), 52 to 72 (ILLTGFCSCFTSFSGFVLFLY), and 83 to 103 (LFFYLNIIIVLNLIIMYAGFL).

It belongs to the fluoride channel Fluc/FEX (TC 1.A.43) family.

The protein localises to the cell inner membrane. It carries out the reaction fluoride(in) = fluoride(out). Its function is as follows. Fluoride-specific ion channel. Important for reducing fluoride concentration in the cell, thus reducing its toxicity. In Prochlorococcus marinus (strain MIT 9515), this protein is Fluoride-specific ion channel FluC.